The primary structure comprises 303 residues: tRNA dimethylallyltransferase (303 aa).

16–23 is a binding site for ATP; that stretch reads GPTASGKS. A substrate-binding site is contributed by 18–23; sequence TASGKS. Residues 41-44 are interaction with substrate tRNA; that stretch reads DSMQ. Positions 141–161 are disordered; that stretch reads AEALHGELSARDPETAGRVRP. An interaction with substrate tRNA region spans residues 165–169; it reads QRIVR.

Belongs to the IPP transferase family. Monomer. Requires Mg(2+) as cofactor.

It carries out the reaction adenosine(37) in tRNA + dimethylallyl diphosphate = N(6)-dimethylallyladenosine(37) in tRNA + diphosphate. In terms of biological role, catalyzes the transfer of a dimethylallyl group onto the adenine at position 37 in tRNAs that read codons beginning with uridine, leading to the formation of N6-(dimethylallyl)adenosine (i(6)A). This is tRNA dimethylallyltransferase from Rhizobium meliloti (strain 1021) (Ensifer meliloti).